The chain runs to 473 residues: Flavin-dependent L-tryptophan oxidase RebO (473 aa).

An N-terminal signal peptide occupies residues Met1–Ala21. Residues Val15–Ala16, Glu35–Gly36, Arg43, Gly61–Arg64, Glu444, and Ala451–Ala456 each bind FAD.

The protein belongs to the flavin monoamine oxidase family. RebO subfamily. In terms of assembly, homodimer. The cofactor is FAD.

It carries out the reaction 7-chloro-L-tryptophan + O2 = 3-(7-chloroindol-3-yl)-2-iminopropanoate + H2O2. The catalysed reaction is L-tryptophan + O2 = 2-iminio-3-(indol-3-yl)propanoate + H2O2. Its function is as follows. Involved in the biosynthesis of the indolocarbazole antitumor agent rebeccamycin. It generates the imine form of 7-chloroindole 3-pyruvate (7Cl-IPA) from 7-chloro-L-tryptophan (7Cl-Trp), with concomitant two-electron reduction of O(2) to H(2)O(2). The enzyme is also active with L-tryptophan as substrate. In Lentzea aerocolonigenes (Lechevalieria aerocolonigenes), this protein is Flavin-dependent L-tryptophan oxidase RebO (rebO).